Here is a 340-residue protein sequence, read N- to C-terminus: Sodium/bile acid cotransporter 7 (340 aa).

Topologically, residues 1-10 (MRLLERVRKE) are cytoplasmic. A helical membrane pass occupies residues 11–31 (WFMVGIVVAIGAAKLEPSVGV). Residues 32–37 (NGGPLK) are Extracellular-facing. Residues 38–58 (PEITVSYIAVATIFFNSGLSL) form a helical membrane-spanning segment. The Cytoplasmic segment spans residues 59–71 (KTEELTSALVHLK). Residues 72-92 (LHLFIQVFTLAFFPTTIWLFL) traverse the membrane as a helical segment. The Extracellular segment spans residues 93–116 (QLLSVTSINEWLLKGLQTVGCMPP). A helical membrane pass occupies residues 117–137 (PVSSAVILTKAVGGNEAAAIF). Asn-138 is a topological domain (cytoplasmic). The helical transmembrane segment at 139–159 (SAFGSFLGIVVTPVLLLLFLG) threads the bilayer. Over 160-163 (SSSS) the chain is Extracellular. The chain crosses the membrane as a helical span at residues 164 to 184 (VPFTSIFSQLFMTVVVPLVIG). At 185–201 (QIVRRYIKDWLERKKPP) the chain is on the cytoplasmic side. The helical transmembrane segment at 202–222 (FGVVSSSVLLMIIYTTFCDTF) threads the bilayer. Residues 223-234 (SNPNIDLDKFSL) lie on the Extracellular side of the membrane. Residues 235–255 (ILILFIIVSIQLSFMLLTFVF) form a helical membrane-spanning segment. At 256-270 (STRNNSGFTPADTVA) the chain is on the cytoplasmic side. Residues 271–291 (IIFCSTHKSLTLGIPMLKIVF) traverse the membrane as a helical segment. The Extracellular segment spans residues 292 to 298 (AGHEHLS). The helical transmembrane segment at 299–319 (LISLPLLIYHPAQILLGSVLV) threads the bilayer. Residues 320–340 (PTIKSWMVSRQKGVKLTRPTV) lie on the Cytoplasmic side of the membrane.

The protein belongs to the bile acid:sodium symporter (BASS) (TC 2.A.28) family. As to expression, strongly expressed in liver, adrenal gland, small intestine and colon. Moderately expressed in heart, lung, kidney and spleen. Weakly expressed in brain.

It localises to the cell membrane. It is found in the endoplasmic reticulum membrane. The protein resides in the golgi apparatus membrane. Functionally, involved in teeth and skeletal development. Has an essential role in the biosynthesis and trafficking of glycosaminoglycans and glycoproteins to produce a proper functioning extracellular matrix. Required for extracellular matrix mineralization. Also involved in the regulation of cellular calcium homeostasis. Does not show transport activity towards bile acids or steroid sulfates (including taurocholate, cholate, chenodeoxycholate, estrone-3-sulfate, dehydroepiandrosterone sulfate (DHEAS) and pregnenolone sulfate). This is Sodium/bile acid cotransporter 7 (Slc10a7) from Rattus norvegicus (Rat).